Reading from the N-terminus, the 140-residue chain is Profilin-1 (140 aa).

Alanine 2 is subject to N-acetylalanine. At serine 28 the chain carries Phosphoserine. Lysine 54 participates in a covalent cross-link: Glycyl lysine isopeptide (Lys-Gly) (interchain with G-Cter in SUMO2); alternate. Lysine 54 is covalently cross-linked (Glycyl lysine isopeptide (Lys-Gly) (interchain with G-Cter in ubiquitin); alternate). Residues serine 57 and serine 85 each carry the phosphoserine modification. Lysine 105 and lysine 108 each carry N6-acetyllysine. Tyrosine 129 is modified (phosphotyrosine). The residue at position 138 (serine 138) is a Phosphoserine; by ROCK1.

It belongs to the profilin family. As to quaternary structure, found in a complex with XPO6, Ran, ACTB and PFN1. Interacts with ACTB. Interacts with VASP. Interacts with HTT. Interacts with SH3BGRL. Occurs in many kinds of cells as a complex with monomeric actin in a 1:1 ratio. Interacts with ACTMAP. Phosphorylation at Ser-138 reduces its affinity for G-actin and blocks its interaction with HTT, reducing its ability to inhibit androgen receptor (AR) and HTT aggregation. Expressed in epididymis (at protein level).

It localises to the cytoplasm. The protein localises to the cytoskeleton. Its function is as follows. Binds to actin and affects the structure of the cytoskeleton. At high concentrations, profilin prevents the polymerization of actin, whereas it enhances it at low concentrations. By binding to PIP2, it inhibits the formation of IP3 and DG. Inhibits androgen receptor (AR) and HTT aggregation and binding of G-actin is essential for its inhibition of AR. This Homo sapiens (Human) protein is Profilin-1 (PFN1).